The chain runs to 145 residues: uncharacterized protein (145 aa).

Residues methionine 1–arginine 41 adopt a coiled-coil conformation. Positions methionine 1–serine 91 are disordered. The segment covering glutamine 7–glutamine 26 has biased composition (low complexity). Positions serine 27–serine 42 are enriched in basic and acidic residues. Residues proline 43 to threonine 58 show a composition bias toward low complexity.

This is an uncharacterized protein from Dictyostelium discoideum (Social amoeba).